The following is a 290-amino-acid chain: ADP-ribosylation factor-like protein 13A (290 aa).

GTP-binding positions include 28 to 35, 71 to 75, and 130 to 133; these read GLNNSGKT, DLNGD, and NKQD. Residues 204-226 are disordered; it reads SKNNTGSGERCSSHSFSTRTGMS.

The protein belongs to the small GTPase superfamily. Arf family.

The sequence is that of ADP-ribosylation factor-like protein 13A (ARL13A) from Homo sapiens (Human).